The chain runs to 137 residues: 1,4-dihydroxy-2-naphthoyl-CoA hydrolase (137 aa).

D13 is an active-site residue.

It belongs to the 4-hydroxybenzoyl-CoA thioesterase family. DHNA-CoA hydrolase subfamily.

It carries out the reaction 1,4-dihydroxy-2-naphthoyl-CoA + H2O = 1,4-dihydroxy-2-naphthoate + CoA + H(+). It participates in cofactor biosynthesis; phylloquinone biosynthesis. The protein operates within quinol/quinone metabolism; 1,4-dihydroxy-2-naphthoate biosynthesis; 1,4-dihydroxy-2-naphthoate from chorismate: step 7/7. Catalyzes the hydrolysis of 1,4-dihydroxy-2-naphthoyl-CoA (DHNA-CoA) to 1,4-dihydroxy-2-naphthoate (DHNA), a reaction involved in phylloquinone (vitamin K1) biosynthesis. The protein is 1,4-dihydroxy-2-naphthoyl-CoA hydrolase of Crocosphaera subtropica (strain ATCC 51142 / BH68) (Cyanothece sp. (strain ATCC 51142)).